A 251-amino-acid chain; its full sequence is Triosephosphate isomerase (251 aa).

9–11 lines the substrate pocket; the sequence is NWK. His95 functions as the Electrophile in the catalytic mechanism. Glu167 functions as the Proton acceptor in the catalytic mechanism. Residues Gly173, Ser213, and 234–235 each bind substrate; that span reads GG. Position 213 is a phosphoserine (Ser213).

This sequence belongs to the triosephosphate isomerase family. As to quaternary structure, homodimer.

Its subcellular location is the cytoplasm. The enzyme catalyses D-glyceraldehyde 3-phosphate = dihydroxyacetone phosphate. It functions in the pathway carbohydrate biosynthesis; gluconeogenesis. The protein operates within carbohydrate degradation; glycolysis; D-glyceraldehyde 3-phosphate from glycerone phosphate: step 1/1. Involved in the gluconeogenesis. Catalyzes stereospecifically the conversion of dihydroxyacetone phosphate (DHAP) to D-glyceraldehyde-3-phosphate (G3P). In Anoxybacillus flavithermus (strain DSM 21510 / WK1), this protein is Triosephosphate isomerase.